Reading from the N-terminus, the 168-residue chain is NADH-quinone oxidoreductase subunit E 2 (168 aa).

[2Fe-2S] cluster-binding residues include C77, C82, C118, and C122.

Belongs to the complex I 24 kDa subunit family. [2Fe-2S] cluster serves as cofactor.

It catalyses the reaction a quinone + NADH + 5 H(+)(in) = a quinol + NAD(+) + 4 H(+)(out). Functionally, NDH-1 shuttles electrons from NADH, via FMN and iron-sulfur (Fe-S) centers, to quinones in the respiratory chain. The immediate electron acceptor for the enzyme in this species is believed to be ubiquinone. Couples the redox reaction to proton translocation (for every two electrons transferred, four hydrogen ions are translocated across the cytoplasmic membrane), and thus conserves the redox energy in a proton gradient. The protein is NADH-quinone oxidoreductase subunit E 2 (nuoE2) of Rhizobium meliloti (strain 1021) (Ensifer meliloti).